The primary structure comprises 576 residues: WAP, Kazal, immunoglobulin, Kunitz and NTR domain-containing protein 2 (576 aa).

The N-terminal stretch at 1–34 is a signal peptide; it reads MWAPRCRRFWSRWEQVAALLLLLLLLGVPPRSLA. The WAP domain maps to 39 to 92; that stretch reads RYSHAGICPNDMNPNLWVDAQSTCRRECETDQECETYEKCCPNVCGTKSCVAAR. Disulfide bonds link cysteine 46-cysteine 79, cysteine 62-cysteine 83, cysteine 66-cysteine 78, cysteine 72-cysteine 88, cysteine 134-cysteine 164, cysteine 138-cysteine 157, cysteine 146-cysteine 175, and cysteine 231-cysteine 287. Positions 126 to 177 constitute a Kazal-like domain; it reads WDGQPVCKCKDRCEKEPSFTCASDGLTYYNRCYMDAEACSKGITLAVVTCRY. Residues 210 to 303 form the Ig-like C2-type domain; sequence PALLNNPVHQ…GVLRADFPLS (94 aa). Residue asparagine 319 is glycosylated (N-linked (GlcNAc...) asparagine). Cystine bridges form between cysteine 328–cysteine 378, cysteine 337–cysteine 361, cysteine 353–cysteine 374, cysteine 386–cysteine 436, cysteine 395–cysteine 419, cysteine 411–cysteine 432, cysteine 445–cysteine 515, cysteine 448–cysteine 517, and cysteine 459–cysteine 566. 2 BPTI/Kunitz inhibitor domains span residues 328–378 and 386–436; these read CLKP…MLAC and CSLP…EESC. Residues 445 to 566 form the NTR domain; sequence CRACKPRQKL…LREVMHKKTC (122 aa). N-linked (GlcNAc...) asparagine glycosylation occurs at asparagine 519.

This sequence belongs to the WFIKKN family. As to quaternary structure, interacts with both mature and propeptide myostatin/MSTN. As to expression, primarily expressed in ovary, testis and brain, but not in liver. In fetal tissues, it is primarily expressed in brain, skeletal muscle, thymus and kidney.

The protein localises to the secreted. Its function is as follows. Protease-inhibitor that contains multiple distinct protease inhibitor domains. Probably has serine protease- and metalloprotease-inhibitor activity. Inhibits the biological activity of mature myostatin, but not activin. In Homo sapiens (Human), this protein is WAP, Kazal, immunoglobulin, Kunitz and NTR domain-containing protein 2 (WFIKKN2).